The primary structure comprises 745 residues: Immunoglobulin superfamily containing leucine-rich repeat protein 2 (745 aa).

An N-terminal signal peptide occupies residues 1–19 (MGPFGALCLAWALLGVVRA). Positions 20–51 (CPEPCACVDKYAHQFADCAYKELREVPEGLPA) constitute an LRRNT domain. The Extracellular portion of the chain corresponds to 20–589 (CPEPCACVDK…VFSTKKELPS (570 aa)). N-linked (GlcNAc...) asparagine glycans are attached at residues asparagine 52 and asparagine 73. 5 LRR repeats span residues 52 to 73 (NVTT…AFVN), 76 to 97 (QVTS…ALAV), 100 to 123 (QLKN…RNLS), 124 to 145 (ALQL…ALGA), and 148 to 169 (DLRS…TFDA). Asparagine 121 carries N-linked (GlcNAc...) asparagine glycosylation. One can recognise an LRRCT domain in the interval 181–232 (NPFHCSCGLVWLQAWAASTRVSLPEPDSIACASPPELQGVPVHRLPALPCAP). One can recognise an Ig-like domain in the interval 233-372 (PSVRLSAEPP…GTNSTSLRVT (140 aa)). The cysteines at positions 260 and 356 are disulfide-linked. Over residues 290 to 300 (KEEDGGDKVED) the composition is skewed to basic and acidic residues. The disordered stretch occupies residues 290 to 328 (KEEDGGDKVEDGEGDGDEDLPTQTEAPTPTPAPAWPAPP). Positions 317–328 (TPTPAPAWPAPP) are enriched in pro residues. Residues asparagine 338 and asparagine 365 are each glycosylated (N-linked (GlcNAc...) asparagine). Positions 376-423 (AGPPKHAPGTGEEPDAQVPTSERKATTKGRSNSVLPFKPEGKTKGQGL) are disordered. 2 N-linked (GlcNAc...) asparagine glycosylation sites follow: asparagine 474 and asparagine 563. The helical transmembrane segment at 590 to 610 (LLVIVTVSVFLLVLATVPLLG) threads the bilayer. Residues 611-745 (AACCHLLAKH…INGNYRQTAG (135 aa)) lie on the Cytoplasmic side of the membrane. Positions 654-697 (SEKSYPARGEAGGEEPEEVPEEGLDEDVEQGDPSGDLQREESLA) are disordered. Positions 665-683 (GGEEPEEVPEEGLDEDVEQ) are enriched in acidic residues. Residue tyrosine 719 is modified to Phosphotyrosine. Serine 720 carries the phosphoserine modification.

As to quaternary structure, homomultimer. Interacts with NTRK1/TrkA. In terms of tissue distribution, at 11.5 dpc, expressed in spinal nerves, their roots and the ventral spinal cord. At 12.5 dpc, detected in the ventral spinal cord, dorsal root ganglia (DRG), dorsal and ventral roots and sympathetic chain ganglia. At 12.5 dpc, expressed in almost all motor neurons which also express RET and in almost all DRG sensory neurons which also express NTRK1. At 18.5 dpc, expressed only in a subset of NTRK1-expressing neurons but still expressed in nearly all RET-expressing neurons.

It localises to the cell membrane. Its function is as follows. Required for axon extension during neural development. The chain is Immunoglobulin superfamily containing leucine-rich repeat protein 2 (Islr2) from Mus musculus (Mouse).